Reading from the N-terminus, the 255-residue chain is Shieldin complex subunit 3 (255 aa).

Positions 33–88 (QDFPTHPLPRFIPWFPYDESKLPLKPERLPPVISEEAAESVKQYLAISEPGVKSQS) are sufficient for interaction with MAD2L2. The disordered stretch occupies residues 116-135 (QTNAAHLDKNSGKEKQHKQR).

In terms of assembly, component of the shieldin complex, consisting of SHLD1, SHLD2, SHLD3 and MAD2L2/REV7. Within the complex, SHLD2 forms a scaffold which interacts with a SHLD3-MAD2L2 subcomplex via its N-terminus, and with SHLD1 via its C-terminus. Interacts with ASTE1.

It localises to the chromosome. Its function is as follows. Component of the shieldin complex, which plays an important role in repair of DNA double-stranded breaks (DSBs). During G1 and S phase of the cell cycle, the complex functions downstream of TP53BP1 to promote non-homologous end joining (NHEJ) and suppress DNA end resection. Mediates various NHEJ-dependent processes including immunoglobulin class-switch recombination, and fusion of unprotected telomeres. In Mus musculus (Mouse), this protein is Shieldin complex subunit 3.